Reading from the N-terminus, the 640-residue chain is MPIITLPNGDQKSFDHPVSVMEVAQSIGPGLAKNTVAGRVNDRLVDACDLITEDSTLQIITPKDEEGLEIIRHSCAHLVGHAVKQLFPEAKMVIGPVIEEGFYYDIWMPRPFTLDDMAAIEERMKKLIDQDYDVIKKMTPRDEVIKVFTDRGEEYKLRLVEDMPEEKAMGLYYHQEYVDMCRGPHVPNTKFLKSFKLTKISGAYWRGDAKNEQLQRIYGTAWADKKQLAAYIKRIEEAEKRDHRKIGKALDLFHMQEEAPGMVFWHANGWTIYQVLEQYMRKVQQDNGYQEIKTPQIVDFTLWEKSGHAANYAENMFTTHSESRNYAVKPMNCPCHVQVFNQGLKSYRDLPIRLAEFGSCHRNEPSGSLHGIMRVRGFTQDDAHIFCTKEQIGKEVADFIKLTLDVYKDFGFEEVQMKLSTRPEKRVGDDALWDLAEKSLADALDAAGLEWELQPGEGAFYGPKIEFSLKDCLGRVWQCGTIQCDFNLPVRLDASYVTEENERDQPVMLHRAILGSFERFIGILIEHYAGFMPPWLSPVQACVMNITDSQAEASEQVVAKLKENGLRAISDLRNEKIGFKIRERTLERIPYLLVLGDREVEEGTVNVRTRSGKNLGTMSVDAFIDLVKSAVAERGRYIVE.

In terms of domain architecture, TGS spans 1–61 (MPIITLPNGD…TEDSTLQIIT (61 aa)). Residues 242–533 (DHRKIGKALD…LIEHYAGFMP (292 aa)) form a catalytic region. The Zn(2+) site is built by cysteine 333, histidine 384, and histidine 510.

The protein belongs to the class-II aminoacyl-tRNA synthetase family. Homodimer. Zn(2+) serves as cofactor.

The protein resides in the cytoplasm. The enzyme catalyses tRNA(Thr) + L-threonine + ATP = L-threonyl-tRNA(Thr) + AMP + diphosphate + H(+). Its function is as follows. Catalyzes the attachment of threonine to tRNA(Thr) in a two-step reaction: L-threonine is first activated by ATP to form Thr-AMP and then transferred to the acceptor end of tRNA(Thr). Also edits incorrectly charged L-seryl-tRNA(Thr). The sequence is that of Threonine--tRNA ligase from Acinetobacter baumannii (strain AB307-0294).